Here is a 158-residue protein sequence, read N- to C-terminus: SsrA-binding protein (158 aa).

The tract at residues 130-158 (KGKKNHDKREAQAKRDWSRQKQRLLKDHG) is disordered. Basic and acidic residues predominate over residues 136–158 (DKREAQAKRDWSRQKQRLLKDHG).

It belongs to the SmpB family.

Its subcellular location is the cytoplasm. Functionally, required for rescue of stalled ribosomes mediated by trans-translation. Binds to transfer-messenger RNA (tmRNA), required for stable association of tmRNA with ribosomes. tmRNA and SmpB together mimic tRNA shape, replacing the anticodon stem-loop with SmpB. tmRNA is encoded by the ssrA gene; the 2 termini fold to resemble tRNA(Ala) and it encodes a 'tag peptide', a short internal open reading frame. During trans-translation Ala-aminoacylated tmRNA acts like a tRNA, entering the A-site of stalled ribosomes, displacing the stalled mRNA. The ribosome then switches to translate the ORF on the tmRNA; the nascent peptide is terminated with the 'tag peptide' encoded by the tmRNA and targeted for degradation. The ribosome is freed to recommence translation, which seems to be the essential function of trans-translation. The chain is SsrA-binding protein from Ruegeria sp. (strain TM1040) (Silicibacter sp.).